We begin with the raw amino-acid sequence, 126 residues long: Glycine cleavage system H protein (126 aa).

The Lipoyl-binding domain occupies 21–103 (TVTVGISNHA…YEGGWIARIK (83 aa)). At K62 the chain carries N6-lipoyllysine.

It belongs to the GcvH family. The glycine cleavage system is composed of four proteins: P, T, L and H. (R)-lipoate is required as a cofactor.

Functionally, the glycine cleavage system catalyzes the degradation of glycine. The H protein shuttles the methylamine group of glycine from the P protein to the T protein. The protein is Glycine cleavage system H protein of Aliivibrio salmonicida (strain LFI1238) (Vibrio salmonicida (strain LFI1238)).